The following is a 260-amino-acid chain: DNA-binding protein RFXANK (260 aa).

Residues 1-79 form a disordered region; it reads MELTQPAEDL…STTLTNRQRG (79 aa). Residues 22–33 show a composition bias toward acidic residues; the sequence is GDPEDPGEEAAD. Residues 57–77 show a composition bias toward polar residues; sequence SVSSPQAGSSLKHSTTLTNRQ. ANK repeat units follow at residues 89–118, 123–152, 156–185, 189–218, and 222–251; these read LDSL…NLVN, RGFT…DPHI, ERES…DINI, NGGT…DLTT, and SGYT…KLFQ.

Forms homodimers. The RFX heterotetrameric complex consists of 2 molecules of RFX5 and one each of RFXAP and RFX-B/RFXANK; with each subunit representing a separate complementation group. Interacts (via ankyrin repeats) with RFX5 (via PxLPxI/L motif); the interaction is direct. RFX forms cooperative DNA binding complexes with X2BP and CBF/NF-Y. RFX associates with CIITA to form an active transcriptional complex. Interacts with RAF1. Interacts (via ankyrin repeats) with RFX7 (via PxLPxI/L motif). Post-translationally, phosphorylated by RAF1. As to expression, ubiquitous.

It localises to the cytoplasm. Its subcellular location is the nucleus. Functionally, activates transcription from class II MHC promoters. Activation requires the activity of the MHC class II transactivator/CIITA. May regulate other genes in the cell. RFX binds the X1 box of MHC-II promoters. May also potentiate the activation of RAF1. Isoform 2 is not involved in the positive regulation of MHC class II genes. The sequence is that of DNA-binding protein RFXANK (RFXANK) from Homo sapiens (Human).